Reading from the N-terminus, the 81-residue chain is NAD(P)H-quinone oxidoreductase subunit O (81 aa).

It belongs to the complex I NdhO subunit family. In terms of assembly, NDH-1 can be composed of about 15 different subunits; different subcomplexes with different compositions have been identified which probably have different functions.

It localises to the cellular thylakoid membrane. The catalysed reaction is a plastoquinone + NADH + (n+1) H(+)(in) = a plastoquinol + NAD(+) + n H(+)(out). The enzyme catalyses a plastoquinone + NADPH + (n+1) H(+)(in) = a plastoquinol + NADP(+) + n H(+)(out). Its function is as follows. NDH-1 shuttles electrons from an unknown electron donor, via FMN and iron-sulfur (Fe-S) centers, to quinones in the respiratory and/or the photosynthetic chain. The immediate electron acceptor for the enzyme in this species is believed to be plastoquinone. Couples the redox reaction to proton translocation, and thus conserves the redox energy in a proton gradient. Cyanobacterial NDH-1 also plays a role in inorganic carbon-concentration. In Prochlorococcus marinus (strain MIT 9303), this protein is NAD(P)H-quinone oxidoreductase subunit O.